The sequence spans 363 residues: Probable cinnamyl alcohol dehydrogenase 6 (363 aa).

C51 contacts Zn(2+). NADP(+) is bound at residue S53. Residues H73, E74, C104, C107, C110, C118, and C167 each contribute to the Zn(2+) site. Residues S171, 192–197 (GLGGLG), 215–220 (SSTTGK), T255, G279, and 302–304 (SGI) each bind NADP(+).

The protein belongs to the zinc-containing alcohol dehydrogenase family. In terms of assembly, homodimer. Zn(2+) is required as a cofactor. Expressed in the primary and lateral roots, and root caps. Expressed in the hypocotyl, cotyledon veins and hydathodes. In stems, expressed in the vascular cambium, interfascicular cambium and developing xylem. Expressed in the style, anthers, stamen filaments, vascular tissues of sepals, stigmatic regions in flowers, and abscission and style regions of siliques.

The enzyme catalyses (E)-cinnamyl alcohol + NADP(+) = (E)-cinnamaldehyde + NADPH + H(+). It catalyses the reaction (E)-coniferol + NADP(+) = (E)-coniferaldehyde + NADPH + H(+). The catalysed reaction is (E)-sinapyl alcohol + NADP(+) = (E)-sinapaldehyde + NADPH + H(+). It carries out the reaction (E)-4-coumaroyl alcohol + NADP(+) = (E)-4-coumaraldehyde + NADPH + H(+). The enzyme catalyses (E)-caffeyl alcohol + NADP(+) = (E)-caffeyl aldehyde + NADPH + H(+). It participates in aromatic compound metabolism; phenylpropanoid biosynthesis. Its function is as follows. Involved in lignin biosynthesis. Catalyzes the final step specific for the production of lignin monomers. Catalyzes the NADPH-dependent reduction of coniferaldehyde, 5-hydroxyconiferaldehyde, sinapaldehyde, 4-coumaraldehyde and caffeyl aldehyde to their respective alcohols. This Arabidopsis thaliana (Mouse-ear cress) protein is Probable cinnamyl alcohol dehydrogenase 6 (CAD6).